Reading from the N-terminus, the 363-residue chain is Protein-glutamate methylesterase/protein-glutamine glutaminase 2 (363 aa).

In terms of domain architecture, Response regulatory spans 7–124 (RVLVVDDSAL…SLTLENVADE (118 aa)). Position 58 is a 4-aspartylphosphate (D58). In terms of domain architecture, CheB-type methylesterase spans 160 to 357 (PVASRTTPSK…NLLMVQSAAQ (198 aa)). Catalysis depends on residues S176, H203, and D299.

The protein belongs to the CheB family. Phosphorylated by CheA. Phosphorylation of the N-terminal regulatory domain activates the methylesterase activity.

It is found in the cytoplasm. The enzyme catalyses [protein]-L-glutamate 5-O-methyl ester + H2O = L-glutamyl-[protein] + methanol + H(+). The catalysed reaction is L-glutaminyl-[protein] + H2O = L-glutamyl-[protein] + NH4(+). In terms of biological role, involved in chemotaxis. Part of a chemotaxis signal transduction system that modulates chemotaxis in response to various stimuli. Catalyzes the demethylation of specific methylglutamate residues introduced into the chemoreceptors (methyl-accepting chemotaxis proteins or MCP) by CheR. Also mediates the irreversible deamidation of specific glutamine residues to glutamic acid. In Koribacter versatilis (strain Ellin345), this protein is Protein-glutamate methylesterase/protein-glutamine glutaminase 2.